Here is a 410-residue protein sequence, read N- to C-terminus: Aminopeptidase AmpS (410 aa).

Positions 250, 316, 340, 345, 378, and 380 each coordinate a divalent metal cation.

The protein belongs to the peptidase M29 family. Co(2+) serves as cofactor. The cofactor is Zn(2+). It depends on Mg(2+) as a cofactor.

In terms of biological role, metal-dependent exopeptidase. In Bacillus subtilis (strain 168), this protein is Aminopeptidase AmpS (ampS).